A 574-amino-acid polypeptide reads, in one-letter code: Enolase 4 (574 aa).

Positions 165–175 (EKERRQMEREA) are enriched in basic and acidic residues. The disordered stretch occupies residues 165–221 (EKERRQMEREASPMPLQPEPSPVTSPAPGKKKGSGKGKKAAVVEKPIPPEETPEAVV). Over residues 179-189 (PLQPEPSPVTS) the composition is skewed to pro residues. Positions 193 to 203 (GKKKGSGKGKK) are enriched in basic residues. Glu-287 lines the substrate pocket. The Proton acceptor role is filled by Lys-467. Position 518 (Lys-518) interacts with substrate.

This sequence belongs to the enolase family.

The catalysed reaction is (2R)-2-phosphoglycerate = phosphoenolpyruvate + H2O. It participates in carbohydrate degradation; glycolysis; pyruvate from D-glyceraldehyde 3-phosphate: step 4/5. The sequence is that of Enolase 4 (eno4) from Xenopus tropicalis (Western clawed frog).